The following is a 306-amino-acid chain: tRNA dimethylallyltransferase (306 aa).

2-9 (GPTASGKT) is a binding site for ATP. Position 4–9 (4–9 (TASGKT)) interacts with substrate. Interaction with substrate tRNA regions lie at residues 27-30 (DSVQ) and 152-156 (QRIVR).

This sequence belongs to the IPP transferase family. In terms of assembly, monomer. The cofactor is Mg(2+).

It catalyses the reaction adenosine(37) in tRNA + dimethylallyl diphosphate = N(6)-dimethylallyladenosine(37) in tRNA + diphosphate. Catalyzes the transfer of a dimethylallyl group onto the adenine at position 37 in tRNAs that read codons beginning with uridine, leading to the formation of N6-(dimethylallyl)adenosine (i(6)A). The polypeptide is tRNA dimethylallyltransferase (Magnetococcus marinus (strain ATCC BAA-1437 / JCM 17883 / MC-1)).